Reading from the N-terminus, the 693-residue chain is Golgin subfamily A member 6C (693 aa).

Disordered regions lie at residues 20 to 71, 497 to 547, and 629 to 693; these read NKLA…DSQY, LPGE…GTEQ, and NPAD…MQDT. A coiled-coil region spans residues 73 to 611; it reads ELAVALESSS…KLLELQELVL (539 aa). Basic and acidic residues predominate over residues 537 to 547; it reads LPKEKADGTEQ. The segment covering 679-693 has biased composition (polar residues); that stretch reads PVQQIVQLSPVMQDT.

It belongs to the GOLGA6 family.

The polypeptide is Golgin subfamily A member 6C (GOLGA6C) (Homo sapiens (Human)).